Consider the following 172-residue polypeptide: Mitochondrial import inner membrane translocase subunit Tim17-B (172 aa).

Cysteine 9 and cysteine 78 are oxidised to a cystine. Helical transmembrane passes span 17-37 (CGGA…IKGF), 61-77 (QIGG…STID), and 113-133 (VGSA…GILL). Residues 146–172 (PFLEDPSQLPPKDGTPAPGYPSYQQYH) form a disordered region.

The protein belongs to the Tim17/Tim22/Tim23 family. In terms of assembly, component of the TIM23 complex at least composed of TIMM23, TIMM17 (TIMM17A or TIMM17B) and TIMM50. The complex interacts with the TIMM44 component of the PAM complex and with DNAJC15. In terms of processing, forms one disulfide bond. As to expression, expression is abundant in heart and skeletal muscle, intermediate in brain, and weak in pancreas, placenta, kidney and liver.

It localises to the mitochondrion inner membrane. In terms of biological role, essential component of the TIM23 complex, a complex that mediates the translocation of transit peptide-containing proteins across the mitochondrial inner membrane. The polypeptide is Mitochondrial import inner membrane translocase subunit Tim17-B (TIMM17B) (Homo sapiens (Human)).